A 353-amino-acid polypeptide reads, in one-letter code: Tetraacyldisaccharide 4'-kinase (353 aa).

Residue threonine 66–threonine 73 coordinates ATP.

It belongs to the LpxK family.

The enzyme catalyses a lipid A disaccharide + ATP = a lipid IVA + ADP + H(+). The protein operates within glycolipid biosynthesis; lipid IV(A) biosynthesis; lipid IV(A) from (3R)-3-hydroxytetradecanoyl-[acyl-carrier-protein] and UDP-N-acetyl-alpha-D-glucosamine: step 6/6. In terms of biological role, transfers the gamma-phosphate of ATP to the 4'-position of a tetraacyldisaccharide 1-phosphate intermediate (termed DS-1-P) to form tetraacyldisaccharide 1,4'-bis-phosphate (lipid IVA). The polypeptide is Tetraacyldisaccharide 4'-kinase (Geobacter sulfurreducens (strain ATCC 51573 / DSM 12127 / PCA)).